Consider the following 324-residue polypeptide: MGARGKTLVPLLVVVATAAMALQSTYLQVDPEKPELQEPDLLSGPCGHRTIPSRIVGGDDAELGRWPWQGSLRVWGNHLCGATLLNRRWVLTAAHCFQKDNDPFDWTVQFGELTSRPSLWNLQAYSNRYQIEDIFLSPKYSEQYPNDIALLKLSSPVTYNNFIQPICLLNSTYKFENRTDCWVTGWGAIGEDESLPSPNTLQEVQVAIINNSMCNHMYKKPDFRTNIWGDMVCAGTPEGGKDACFGDSGGPLACDQDTVWYQVGVVSWGIGCGRPNRPGVYTNISHHYNWIQSTMIRNGLLRPDPVPLLLFLTLAWASSLLRPA.

An N-terminal signal peptide occupies residues 1-21 (MGARGKTLVPLLVVVATAAMA). Residues 22–54 (LQSTYLQVDPEKPELQEPDLLSGPCGHRTIPSR) constitute a propeptide that is removed on maturation. 2 disulfides stabilise this stretch: cysteine 46–cysteine 167 and cysteine 80–cysteine 96. The 242-residue stretch at 55–296 (IVGGDDAELG…HYNWIQSTMI (242 aa)) folds into the Peptidase S1 domain. Catalysis depends on charge relay system residues histidine 95 and aspartate 147. N-linked (GlcNAc...) asparagine glycans are attached at residues asparagine 170, asparagine 177, and asparagine 210. Intrachain disulfides connect cysteine 181–cysteine 254, cysteine 214–cysteine 233, and cysteine 244–cysteine 272. The active-site Charge relay system is serine 248. N-linked (GlcNAc...) asparagine glycosylation is present at asparagine 283. A lipid anchor (GPI-anchor amidated asparagine) is attached at asparagine 298. A propeptide spans 299–324 (GLLRPDPVPLLLFLTLAWASSLLRPA) (removed in mature form).

Belongs to the peptidase S1 family. As to expression, testis.

Its subcellular location is the cell membrane. Could regulate proteolytic events associated with testicular germ cell maturation. The protein is Testisin (Prss21) of Mus musculus (Mouse).